Here is a 79-residue protein sequence, read N- to C-terminus: Acyl carrier protein (79 aa).

Residues 3 to 78 (QEILEKVCSI…DAVKFIEEKK (76 aa)) form the Carrier domain. Ser38 carries the O-(pantetheine 4'-phosphoryl)serine modification.

This sequence belongs to the acyl carrier protein (ACP) family. In terms of processing, 4'-phosphopantetheine is transferred from CoA to a specific serine of apo-ACP by AcpS. This modification is essential for activity because fatty acids are bound in thioester linkage to the sulfhydryl of the prosthetic group.

It localises to the cytoplasm. The protein operates within lipid metabolism; fatty acid biosynthesis. Its function is as follows. Carrier of the growing fatty acid chain in fatty acid biosynthesis. The protein is Acyl carrier protein of Prochlorococcus marinus (strain MIT 9301).